We begin with the raw amino-acid sequence, 419 residues long: Probable dual-specificity RNA methyltransferase RlmN (419 aa).

The disordered stretch occupies residues 1-21; that stretch reads MTAESDSPDGPVSAGTGRPVR. The Proton acceptor role is filled by E124. Residues 130–369 form the Radical SAM core domain; it reads YPDRATVCVS…ATTVRDTRGR (240 aa). C137 and C375 are disulfide-bonded. Positions 144, 148, and 151 each coordinate [4Fe-4S] cluster. S-adenosyl-L-methionine contacts are provided by residues 199-200, S233, 256-258, and N332; these read GE and SLH. Residue C375 is the S-methylcysteine intermediate of the active site. A disordered region spans residues 383–419; it reads AGRARRVESARPVESARPVGVAGAASGSPAHGSRVLR. Residues 397–419 show a composition bias toward low complexity; sequence SARPVGVAGAASGSPAHGSRVLR.

The protein belongs to the radical SAM superfamily. RlmN family. The cofactor is [4Fe-4S] cluster.

It localises to the cytoplasm. It carries out the reaction adenosine(2503) in 23S rRNA + 2 reduced [2Fe-2S]-[ferredoxin] + 2 S-adenosyl-L-methionine = 2-methyladenosine(2503) in 23S rRNA + 5'-deoxyadenosine + L-methionine + 2 oxidized [2Fe-2S]-[ferredoxin] + S-adenosyl-L-homocysteine. The enzyme catalyses adenosine(37) in tRNA + 2 reduced [2Fe-2S]-[ferredoxin] + 2 S-adenosyl-L-methionine = 2-methyladenosine(37) in tRNA + 5'-deoxyadenosine + L-methionine + 2 oxidized [2Fe-2S]-[ferredoxin] + S-adenosyl-L-homocysteine. In terms of biological role, specifically methylates position 2 of adenine 2503 in 23S rRNA and position 2 of adenine 37 in tRNAs. This is Probable dual-specificity RNA methyltransferase RlmN from Frankia alni (strain DSM 45986 / CECT 9034 / ACN14a).